The sequence spans 517 residues: ATP synthase subunit alpha (517 aa).

ATP is bound at residue 175–182 (GDRQTGKT).

It belongs to the ATPase alpha/beta chains family. F-type ATPases have 2 components, CF(1) - the catalytic core - and CF(0) - the membrane proton channel. CF(1) has five subunits: alpha(3), beta(3), gamma(1), delta(1), epsilon(1). CF(0) has three main subunits: a(1), b(2) and c(9-12). The alpha and beta chains form an alternating ring which encloses part of the gamma chain. CF(1) is attached to CF(0) by a central stalk formed by the gamma and epsilon chains, while a peripheral stalk is formed by the delta and b chains.

It localises to the cell membrane. It carries out the reaction ATP + H2O + 4 H(+)(in) = ADP + phosphate + 5 H(+)(out). In terms of biological role, produces ATP from ADP in the presence of a proton gradient across the membrane. The alpha chain is a regulatory subunit. The sequence is that of ATP synthase subunit alpha from Herpetosiphon aurantiacus (strain ATCC 23779 / DSM 785 / 114-95).